The chain runs to 142 residues: Sorting nexin-3 (142 aa).

The PX domain maps to 21 to 138 (NFLEIEVRNP…ASFIQDPNWD (118 aa)). Residues arginine 64, serine 66, lysine 90, arginine 95, and arginine 104 each contribute to the a 1,2-diacyl-sn-glycero-3-phospho-(1D-myo-inositol-3-phosphate) site.

It belongs to the sorting nexin family.

The protein localises to the cytoplasm. The protein resides in the golgi apparatus membrane. Its subcellular location is the prevacuolar compartment membrane. Required for retention of late Golgi membrane proteins. Component of the retrieval machinery that functions by direct interaction with the cytosolic tails of certain TGN membrane proteins during the sorting/budding process at the prevacuolar compartment. Binds phosphatidylinositol 3-phosphate (PtdIns(P3)). This Aspergillus fumigatus (strain ATCC MYA-4609 / CBS 101355 / FGSC A1100 / Af293) (Neosartorya fumigata) protein is Sorting nexin-3 (snx3).